A 130-amino-acid chain; its full sequence is Peptide methionine sulfoxide reductase MsrB (130 aa).

In terms of domain architecture, MsrB spans 1-122 (MKKREDMTEM…NSVSMAFEDS (122 aa)). Zn(2+) contacts are provided by Cys39, Cys42, Cys88, and Cys91. Cys111 functions as the Nucleophile in the catalytic mechanism.

It belongs to the MsrB Met sulfoxide reductase family. Zn(2+) serves as cofactor.

The catalysed reaction is L-methionyl-[protein] + [thioredoxin]-disulfide + H2O = L-methionyl-(R)-S-oxide-[protein] + [thioredoxin]-dithiol. The sequence is that of Peptide methionine sulfoxide reductase MsrB from Pasteurella multocida (strain Pm70).